Consider the following 563-residue polypeptide: Delta-1-pyrroline-5-carboxylate dehydrogenase, mitochondrial (563 aa).

Residues 1-24 (MLLPAPALRRALLSRPWTGAGLRW) constitute a mitochondrion transit peptide. An N6-succinyllysine modification is found at lysine 31. Serine 44 is subject to Phosphoserine. N6-acetyllysine is present on lysine 52. Residues lysine 93, lysine 99, lysine 114, lysine 130, and lysine 175 each carry the N6-acetyllysine; alternate modification. N6-succinyllysine; alternate occurs at positions 93, 99, 114, 130, and 175. Residues serine 208, lysine 233, and 286–290 (GSVPT) contribute to the NAD(+) site. The Proton acceptor role is filled by glutamate 314. Residue lysine 318 is modified to N6-acetyllysine. N6-succinyllysine is present on lysine 347. Residue cysteine 348 is the Nucleophile of the active site. N6-acetyllysine occurs at positions 365 and 376. At lysine 395 the chain carries N6-succinyllysine. Glutamate 447 is a binding site for NAD(+). Lysine 462 carries the post-translational modification N6-acetyllysine. Lysine 509 is modified (N6-acetyllysine; alternate). An N6-succinyllysine; alternate modification is found at lysine 509. Substrate is bound at residue serine 513. An N6-acetyllysine mark is found at lysine 531 and lysine 552.

It belongs to the aldehyde dehydrogenase family. As to quaternary structure, homodimer. As to expression, highest expression is found in liver followed by skeletal muscle, kidney, heart, brain, placenta, lung and pancreas.

Its subcellular location is the mitochondrion matrix. The enzyme catalyses L-glutamate 5-semialdehyde + NAD(+) + H2O = L-glutamate + NADH + 2 H(+). The protein operates within amino-acid degradation; L-proline degradation into L-glutamate; L-glutamate from L-proline: step 2/2. In terms of biological role, irreversible conversion of delta-1-pyrroline-5-carboxylate (P5C), derived either from proline or ornithine, to glutamate. This is a necessary step in the pathway interconnecting the urea and tricarboxylic acid cycles. The preferred substrate is glutamic gamma-semialdehyde, other substrates include succinic, glutaric and adipic semialdehydes. This Homo sapiens (Human) protein is Delta-1-pyrroline-5-carboxylate dehydrogenase, mitochondrial (ALDH4A1).